Here is a 240-residue protein sequence, read N- to C-terminus: Small ribosomal subunit protein uS3m (240 aa).

The protein belongs to the universal ribosomal protein uS3 family.

It is found in the mitochondrion. The protein is Small ribosomal subunit protein uS3m (RPS3) of Chondrus crispus (Carrageen Irish moss).